A 683-amino-acid chain; its full sequence is Methionine--tRNA ligase (683 aa).

Residues 14–24 carry the 'HIGH' region motif; the sequence is PYANGSIHLGH. Zn(2+) is bound by residues C145, C148, C158, and C161. The 'KMSKS' region motif lies at 331–335; the sequence is KMSKS. Position 334 (K334) interacts with ATP. Positions 545 to 572 are disordered; it reads ASKEDLTASQTDTGAAAPAGNGELAKDP. The tRNA-binding domain occupies 581-683; the sequence is TFAAVDLRVA…SGAKPGQRIK (103 aa).

Belongs to the class-I aminoacyl-tRNA synthetase family. MetG type 1 subfamily. In terms of assembly, homodimer. Requires Zn(2+) as cofactor.

It localises to the cytoplasm. The enzyme catalyses tRNA(Met) + L-methionine + ATP = L-methionyl-tRNA(Met) + AMP + diphosphate. Functionally, is required not only for elongation of protein synthesis but also for the initiation of all mRNA translation through initiator tRNA(fMet) aminoacylation. This is Methionine--tRNA ligase from Pseudomonas fluorescens (strain Pf0-1).